Here is a 230-residue protein sequence, read N- to C-terminus: Urease accessory protein UreF (230 aa).

The protein belongs to the UreF family. UreD, UreF and UreG form a complex that acts as a GTP-hydrolysis-dependent molecular chaperone, activating the urease apoprotein by helping to assemble the nickel containing metallocenter of UreC. The UreE protein probably delivers the nickel.

The protein localises to the cytoplasm. In terms of biological role, required for maturation of urease via the functional incorporation of the urease nickel metallocenter. The polypeptide is Urease accessory protein UreF (Marinomonas sp. (strain MWYL1)).